A 207-amino-acid polypeptide reads, in one-letter code: Outer-membrane lipoprotein LolB (207 aa).

Positions 1 to 21 (MPMRKRHFYRLLPLASLLLAA) are cleaved as a signal peptide. A lipid anchor (N-palmitoyl cysteine) is attached at Cys-22. A lipid anchor (S-diacylglycerol cysteine) is attached at Cys-22.

Belongs to the LolB family. As to quaternary structure, monomer.

The protein localises to the cell outer membrane. Plays a critical role in the incorporation of lipoproteins in the outer membrane after they are released by the LolA protein. The sequence is that of Outer-membrane lipoprotein LolB from Yersinia pseudotuberculosis serotype O:3 (strain YPIII).